Here is a 145-residue protein sequence, read N- to C-terminus: uncharacterized protein (145 aa).

Phosphoserine is present on S67.

As to expression, expressed in retina and retinoblastoma.

This is an uncharacterized protein from Homo sapiens (Human).